Here is a 398-residue protein sequence, read N- to C-terminus: Succinate--CoA ligase [ADP-forming] subunit beta (398 aa).

In terms of domain architecture, ATP-grasp spans 9–254 (KRLLHTYGAP…LSEEDEKEIE (246 aa)). Residues lysine 46, 53 to 55 (GRG), glutamate 109, alanine 112, and glutamate 117 contribute to the ATP site. Residues asparagine 209 and aspartate 223 each coordinate Mg(2+). Residues asparagine 274 and 331 to 333 (GIM) contribute to the substrate site.

Belongs to the succinate/malate CoA ligase beta subunit family. Heterotetramer of two alpha and two beta subunits. Mg(2+) serves as cofactor.

It carries out the reaction succinate + ATP + CoA = succinyl-CoA + ADP + phosphate. It catalyses the reaction GTP + succinate + CoA = succinyl-CoA + GDP + phosphate. The protein operates within carbohydrate metabolism; tricarboxylic acid cycle; succinate from succinyl-CoA (ligase route): step 1/1. Its function is as follows. Succinyl-CoA synthetase functions in the citric acid cycle (TCA), coupling the hydrolysis of succinyl-CoA to the synthesis of either ATP or GTP and thus represents the only step of substrate-level phosphorylation in the TCA. The beta subunit provides nucleotide specificity of the enzyme and binds the substrate succinate, while the binding sites for coenzyme A and phosphate are found in the alpha subunit. In Brucella anthropi (strain ATCC 49188 / DSM 6882 / CCUG 24695 / JCM 21032 / LMG 3331 / NBRC 15819 / NCTC 12168 / Alc 37) (Ochrobactrum anthropi), this protein is Succinate--CoA ligase [ADP-forming] subunit beta.